Consider the following 205-residue polypeptide: High frequency lysogenization protein HflD homolog (205 aa).

The protein belongs to the HflD family.

The protein localises to the cytoplasm. Its subcellular location is the cell inner membrane. This Shewanella sp. (strain ANA-3) protein is High frequency lysogenization protein HflD homolog.